The following is a 332-amino-acid chain: Cytochrome c1, heme protein, mitochondrial (332 aa).

Residues 1–70 (MLARTCLRST…YYHLYGFASA (70 aa)) constitute a mitochondrion transit peptide. Over 71 to 277 (MTPAEEGLHA…AEPEMDDRKR (207 aa)) the chain is Mitochondrial intermembrane. Residues 97-250 (QALRRGFQVY…GLVDYEDGTP (154 aa)) enclose the Cytochrome c domain. Heme c is bound by residues cysteine 110, cysteine 113, and histidine 114. A compositionally biased stretch (acidic residues) spans 139-151 (EENEYDTEPNDQG). The disordered stretch occupies residues 139 to 162 (EENEYDTEPNDQGEIEKRPGKLSD). Residue methionine 234 coordinates heme c. The helical transmembrane segment at 278 to 296 (MGMKVLVVTSVLFALSVYV) threads the bilayer. Over 297 to 332 (KRYKWAWLKSRKIVYDPPKSPPPATNLALPQQRAKS) the chain is Mitochondrial matrix.

Belongs to the cytochrome c family. In terms of assembly, component of the ubiquinol-cytochrome c oxidoreductase (cytochrome b-c1 complex, complex III, CIII), a multisubunit enzyme composed of 10 subunits. The complex is composed of 3 respiratory subunits cytochrome b (cob), cytochrome c1 (cyt-1) and Rieske protein (fes-1), 2 core protein subunits pep and ucr-1, and 5 low-molecular weight protein subunits qcr6, qcr7, qcr8, qcr9 and probably NCU16844/qcr10. The complex exists as an obligatory dimer and forms supercomplexes (SCs) in the inner mitochondrial membrane with NADH-ubiquinone oxidoreductase (complex I, CI) and cytochrome c oxidase (complex IV, CIV), resulting in different assemblies (supercomplexes SCI(1)III(2), SCIII(2)IV(1) and SCIII(2)IV(2) as well as higher order I(x)III(y)IV(z) megacomplexes). Requires heme c as cofactor.

Its subcellular location is the mitochondrion inner membrane. It carries out the reaction a quinol + 2 Fe(III)-[cytochrome c](out) = a quinone + 2 Fe(II)-[cytochrome c](out) + 2 H(+)(out). Functionally, component of the ubiquinol-cytochrome c oxidoreductase, a multisubunit transmembrane complex that is part of the mitochondrial electron transport chain which drives oxidative phosphorylation. The respiratory chain contains 3 multisubunit complexes succinate dehydrogenase (complex II, CII), ubiquinol-cytochrome c oxidoreductase (cytochrome b-c1 complex, complex III, CIII) and cytochrome c oxidase (complex IV, CIV), that cooperate to transfer electrons derived from NADH and succinate to molecular oxygen, creating an electrochemical gradient over the inner membrane that drives transmembrane transport and the ATP synthase. The cytochrome b-c1 complex catalyzes electron transfer from ubiquinol to cytochrome c, linking this redox reaction to translocation of protons across the mitochondrial inner membrane, with protons being carried across the membrane as hydrogens on the quinol. In the process called Q cycle, 2 protons are consumed from the matrix, 4 protons are released into the intermembrane space and 2 electrons are passed to cytochrome c. Cytochrome c1 is a catalytic core subunit containing a c-type heme. It transfers electrons from the [2Fe-2S] iron-sulfur cluster of the Rieske protein to cytochrome c. The chain is Cytochrome c1, heme protein, mitochondrial (cyt-1) from Neurospora crassa (strain ATCC 24698 / 74-OR23-1A / CBS 708.71 / DSM 1257 / FGSC 987).